The chain runs to 371 residues: Alanine dehydrogenase (371 aa).

The substrate site is built by arginine 15 and lysine 75. Residue histidine 96 is the Proton donor/acceptor of the active site. Residues serine 134, 178 to 179, aspartate 198, lysine 203, serine 220, 239 to 240, 267 to 270, arginine 279, and 298 to 301 contribute to the NAD(+) site; these read TA, VL, IAID, and VANM. Residue aspartate 270 is the Proton donor/acceptor of the active site. Glutamate 323 and histidine 327 together coordinate Mg(2+).

It belongs to the AlaDH/PNT family. Homohexamer. Trimer of dimers. Mg(2+) serves as cofactor.

The protein localises to the secreted. The catalysed reaction is L-alanine + NAD(+) + H2O = pyruvate + NH4(+) + NADH + H(+). Its pathway is amino-acid degradation; L-alanine degradation via dehydrogenase pathway; NH(3) and pyruvate from L-alanine: step 1/1. Inhibited by CuSO(4) and ZnCl(2). Its function is as follows. Catalyzes the reversible reductive amination of pyruvate to L-alanine. However, since the physiological environment of M.tuberculosis has a neutral pH, it can be assumed that the enzyme catalyzes exclusively the formation of L-alanine. May play a role in cell wall synthesis as L-alanine is an important constituent of the peptidoglycan layer. This chain is Alanine dehydrogenase (ald), found in Mycobacterium tuberculosis (strain ATCC 25618 / H37Rv).